Here is a 269-residue protein sequence, read N- to C-terminus: Eukaryotic translation initiation factor 3 subunit G-1 (269 aa).

The 79-residue stretch at A188–P266 folds into the RRM domain.

It belongs to the eIF-3 subunit G family. As to quaternary structure, component of the eukaryotic translation initiation factor 3 (eIF-3) complex. The eIF-3 complex interacts with pix.

Its subcellular location is the cytoplasm. RNA-binding component of the eukaryotic translation initiation factor 3 (eIF-3) complex, which is involved in protein synthesis of a specialized repertoire of mRNAs and, together with other initiation factors, stimulates binding of mRNA and methionyl-tRNAi to the 40S ribosome. The eIF-3 complex specifically targets and initiates translation of a subset of mRNAs involved in cell proliferation. This subunit can bind 18S rRNA. The chain is Eukaryotic translation initiation factor 3 subunit G-1 from Drosophila persimilis (Fruit fly).